The following is a 518-amino-acid chain: Arrestin-related trafficking adapter 10 (518 aa).

Lys-118 is covalently cross-linked (Glycyl lysine isopeptide (Lys-Gly) (interchain with G-Cter in ubiquitin)).

Belongs to the ART10 family. Interacts with RSP5. Ubiquitinated by RSP5.

The protein resides in the cytoplasm. Functionally, may regulate endocytosis by recruiting RSP5 ubiquitin ligase activity to specific plasma membrane proteins in response to extracellular stimuli. This Saccharomyces cerevisiae (strain Lalvin EC1118 / Prise de mousse) (Baker's yeast) protein is Arrestin-related trafficking adapter 10 (ART10).